The following is a 159-amino-acid chain: RNA pyrophosphohydrolase (159 aa).

A Nudix hydrolase domain is found at 6-149 (GFRPNVGIIL…KREVYRRALK (144 aa)). The Nudix box signature appears at 38-59 (GGINDRESPEEALYRELNEEVG).

The protein belongs to the Nudix hydrolase family. RppH subfamily. A divalent metal cation serves as cofactor.

Accelerates the degradation of transcripts by removing pyrophosphate from the 5'-end of triphosphorylated RNA, leading to a more labile monophosphorylated state that can stimulate subsequent ribonuclease cleavage. The chain is RNA pyrophosphohydrolase from Ectopseudomonas mendocina (strain ymp) (Pseudomonas mendocina).